The chain runs to 930 residues: Endoplasmic reticulum aminopeptidase 1 (930 aa).

Over 1–2 (MP) the chain is Cytoplasmic. Residues 3–23 (SLLSLVLTFLAVSSPSCCQNS) traverse the membrane as a helical; Signal-anchor for type II membrane protein segment. Topologically, residues 24-930 (DTASPKASNG…WLQKERQELL (907 aa)) are lumenal. 2 N-linked (GlcNAc...) asparagine glycosylation sites follow: Asn-59 and Asn-143. Substrate contacts are provided by residues Glu-172 and 306-310 (GAMEN). His-342 is a Zn(2+) binding site. The active-site Proton acceptor is Glu-343. Residues His-346 and Glu-365 each coordinate Zn(2+). A disulfide bond links Cys-393 and Cys-432. N-linked (GlcNAc...) asparagine glycans are attached at residues Asn-403 and Asn-655. Cys-725 and Cys-732 are joined by a disulfide. Asn-749 and Asn-890 each carry an N-linked (GlcNAc...) asparagine glycan.

It belongs to the peptidase M1 family. As to quaternary structure, monomer. May also exist as a heterodimer; with ERAP2. Interacts with RBMX. The cofactor is Zn(2+). N-glycosylated. In terms of tissue distribution, ubiquitous.

The protein localises to the endoplasmic reticulum membrane. Its function is as follows. Aminopeptidase that plays a central role in peptide trimming, a step required for the generation of most HLA class I-binding peptides. Peptide trimming is essential to customize longer precursor peptides to fit them to the correct length required for presentation on MHC class I molecules. Strongly prefers substrates 9-16 residues long. Rapidly degrades 13-mer to a 9-mer and then stops. Preferentially hydrolyzes the residue Leu and peptides with a hydrophobic C-terminus, while it has weak activity toward peptides with charged C-terminus. May play a role in the inactivation of peptide hormones. May be involved in the regulation of blood pressure through the inactivation of angiotensin II and/or the generation of bradykinin in the kidney. In Rattus norvegicus (Rat), this protein is Endoplasmic reticulum aminopeptidase 1 (Erap1).